We begin with the raw amino-acid sequence, 144 residues long: Large ribosomal subunit protein uL16 (144 aa).

The protein belongs to the universal ribosomal protein uL16 family. Part of the 50S ribosomal subunit.

Functionally, binds 23S rRNA and is also seen to make contacts with the A and possibly P site tRNAs. The sequence is that of Large ribosomal subunit protein uL16 from Lacticaseibacillus paracasei (strain ATCC 334 / BCRC 17002 / CCUG 31169 / CIP 107868 / KCTC 3260 / NRRL B-441) (Lactobacillus paracasei).